Consider the following 74-residue polypeptide: Guanine nucleotide-binding protein G(T) subunit gamma-T1 (74 aa).

At Cys71 the chain carries Cysteine methyl ester. Cys71 carries the S-farnesyl cysteine lipid modification. A propeptide spans 72–74 (removed in mature form); the sequence is VIS.

Belongs to the G protein gamma family. In terms of assembly, g proteins are composed of 3 units, alpha, beta and gamma. Retinal rod outer segment.

Its subcellular location is the cell membrane. Its function is as follows. Guanine nucleotide-binding proteins (G proteins) are involved as a modulator or transducer in various transmembrane signaling systems. The beta and gamma chains are required for the GTPase activity, for replacement of GDP by GTP, and for G protein-effector interaction. In Canis lupus familiaris (Dog), this protein is Guanine nucleotide-binding protein G(T) subunit gamma-T1 (GNGT1).